A 197-amino-acid chain; its full sequence is NADH-quinone oxidoreductase subunit C (197 aa).

It belongs to the complex I 30 kDa subunit family. As to quaternary structure, NDH-1 is composed of 14 different subunits. Subunits NuoB, C, D, E, F, and G constitute the peripheral sector of the complex.

Its subcellular location is the cell inner membrane. The enzyme catalyses a quinone + NADH + 5 H(+)(in) = a quinol + NAD(+) + 4 H(+)(out). Its function is as follows. NDH-1 shuttles electrons from NADH, via FMN and iron-sulfur (Fe-S) centers, to quinones in the respiratory chain. The immediate electron acceptor for the enzyme in this species is believed to be ubiquinone. Couples the redox reaction to proton translocation (for every two electrons transferred, four hydrogen ions are translocated across the cytoplasmic membrane), and thus conserves the redox energy in a proton gradient. This chain is NADH-quinone oxidoreductase subunit C, found in Caulobacter vibrioides (strain ATCC 19089 / CIP 103742 / CB 15) (Caulobacter crescentus).